We begin with the raw amino-acid sequence, 109 residues long: Nucleoid-associated protein Sama_1311 (109 aa).

Belongs to the YbaB/EbfC family. As to quaternary structure, homodimer.

It is found in the cytoplasm. It localises to the nucleoid. In terms of biological role, binds to DNA and alters its conformation. May be involved in regulation of gene expression, nucleoid organization and DNA protection. The polypeptide is Nucleoid-associated protein Sama_1311 (Shewanella amazonensis (strain ATCC BAA-1098 / SB2B)).